The chain runs to 339 residues: DNA-directed RNA polymerase subunit alpha (339 aa).

Residues 1-233 (MVREEVAGST…DLFLPFLHAE (233 aa)) are alpha N-terminal domain (alpha-NTD). Residues 266 to 339 (GIPLNCIFID…IDLLKNKLSF (74 aa)) are alpha C-terminal domain (alpha-CTD).

The protein belongs to the RNA polymerase alpha chain family. In terms of assembly, in plastids the minimal PEP RNA polymerase catalytic core is composed of four subunits: alpha, beta, beta', and beta''. When a (nuclear-encoded) sigma factor is associated with the core the holoenzyme is formed, which can initiate transcription.

It is found in the plastid. The protein resides in the chloroplast. It carries out the reaction RNA(n) + a ribonucleoside 5'-triphosphate = RNA(n+1) + diphosphate. DNA-dependent RNA polymerase catalyzes the transcription of DNA into RNA using the four ribonucleoside triphosphates as substrates. The chain is DNA-directed RNA polymerase subunit alpha from Elymus canadensis (Canada wild rye).